The following is a 156-amino-acid chain: Large ribosomal subunit protein uL15 (156 aa).

Residues 25 to 48 (RGIGCGKGKTSGRGHKGQKARSGV) form a disordered region. Residues 34–43 (TSGRGHKGQK) are compositionally biased toward basic residues.

It belongs to the universal ribosomal protein uL15 family. Part of the 50S ribosomal subunit.

In terms of biological role, binds to the 23S rRNA. This chain is Large ribosomal subunit protein uL15, found in Wolbachia pipientis wMel.